The chain runs to 320 residues: rRNA methyltransferase 2, mitochondrial (320 aa).

The N-terminal 18 residues, 1–18 (MILVYNRIRSIISSSLGR), are a transit peptide targeting the mitochondrion. Residues 83 to 86 (PGAW), Asp104, 178 to 179 (DI), and Asp203 contribute to the S-adenosyl-L-methionine site. The active-site Proton acceptor is Lys264.

It belongs to the class I-like SAM-binding methyltransferase superfamily. RNA methyltransferase RlmE family.

Its subcellular location is the mitochondrion. It carries out the reaction uridine(2791) in 21S rRNA + S-adenosyl-L-methionine = 2'-O-methyluridine(2791) in 21S rRNA + S-adenosyl-L-homocysteine + H(+). In terms of biological role, S-adenosyl-L-methionine-dependent 2'-O-ribose methyltransferase that catalyzes the formation of 2'-O-methyluridine at position 2791 (Um2791) in the 21S mitochondrial large subunit ribosomal RNA (mtLSU rRNA), a universally conserved modification in the peptidyl transferase domain of the mtLSU rRNA. In Saccharomyces cerevisiae (strain ATCC 204508 / S288c) (Baker's yeast), this protein is rRNA methyltransferase 2, mitochondrial.